A 432-amino-acid chain; its full sequence is Lecithin-cholesterol acyltransferase-like 1 (432 aa).

The helical transmembrane segment at 7-29 threads the bilayer; sequence HYSVVIAILVVVTMTSMCQAVGS. Ser209 acts as the Acyl-ester intermediate in catalysis. Catalysis depends on charge relay system residues Asp374 and His400.

This sequence belongs to the AB hydrolase superfamily. Lipase family.

The protein resides in the membrane. This Arabidopsis thaliana (Mouse-ear cress) protein is Lecithin-cholesterol acyltransferase-like 1 (LCAT1).